Reading from the N-terminus, the 157-residue chain is Ribonuclease H (157 aa).

Positions 1 to 146 (MPDLFAYTDG…ADELARAGMA (146 aa)) constitute an RNase H type-1 domain. D9, E52, D74, and D138 together coordinate Mg(2+).

The protein belongs to the RNase H family. Monomer. The cofactor is Mg(2+).

It localises to the cytoplasm. It carries out the reaction Endonucleolytic cleavage to 5'-phosphomonoester.. Its function is as follows. Endonuclease that specifically degrades the RNA of RNA-DNA hybrids. This chain is Ribonuclease H, found in Ruegeria sp. (strain TM1040) (Silicibacter sp.).